Here is a 239-residue protein sequence, read N- to C-terminus: tRNA (guanine-N(7)-)-methyltransferase (239 aa).

The segment covering Met-1–Glu-13 has biased composition (polar residues). Residues Met-1–Leu-30 form a disordered region. Positions 72, 97, 124, and 147 each coordinate S-adenosyl-L-methionine. The active site involves Asp-147. Substrate-binding residues include Lys-151 and Asp-183.

It belongs to the class I-like SAM-binding methyltransferase superfamily. TrmB family.

The catalysed reaction is guanosine(46) in tRNA + S-adenosyl-L-methionine = N(7)-methylguanosine(46) in tRNA + S-adenosyl-L-homocysteine. It participates in tRNA modification; N(7)-methylguanine-tRNA biosynthesis. In terms of biological role, catalyzes the formation of N(7)-methylguanine at position 46 (m7G46) in tRNA. The protein is tRNA (guanine-N(7)-)-methyltransferase of Synechococcus sp. (strain JA-2-3B'a(2-13)) (Cyanobacteria bacterium Yellowstone B-Prime).